Consider the following 133-residue polypeptide: Hydrogenase maturation factor HypA (133 aa).

Position 2 (His-2) interacts with Ni(2+). Residues Cys-73, Cys-75, Cys-105, and Cys-108 each contribute to the Zn(2+) site.

It belongs to the HypA/HybF family.

Involved in the maturation of [NiFe] hydrogenases. Required for nickel insertion into the metal center of the hydrogenase. The chain is Hydrogenase maturation factor HypA from Methanosarcina acetivorans (strain ATCC 35395 / DSM 2834 / JCM 12185 / C2A).